Consider the following 186-residue polypeptide: Nucleoside diphosphate kinase, mitochondrial (186 aa).

A mitochondrion-targeting transit peptide spans 1–32; sequence MGSLFGRVAALRALLCGPRFQCLLVRPSSGGP. Residues Lys44, Phe92, Arg120, Thr126, Arg137, and Asn147 each contribute to the ATP site. His150 (pros-phosphohistidine intermediate) is an active-site residue.

It belongs to the NDK family. As to quaternary structure, homohexamer. Interacts with OPA1. Interacts with CAPN8. Mg(2+) is required as a cofactor. In terms of tissue distribution, expressed in the base region of the oxyntic and pyloric mucosae.

It localises to the mitochondrion intermembrane space. Its subcellular location is the mitochondrion matrix. It carries out the reaction a 2'-deoxyribonucleoside 5'-diphosphate + ATP = a 2'-deoxyribonucleoside 5'-triphosphate + ADP. It catalyses the reaction a ribonucleoside 5'-diphosphate + ATP = a ribonucleoside 5'-triphosphate + ADP. Its function is as follows. Major role in the synthesis of nucleoside triphosphates other than ATP. The ATP gamma phosphate is transferred to the NDP beta phosphate via a ping-pong mechanism, using a phosphorylated active-site intermediate. Through the catalyzed exchange of gamma-phosphate between di- and triphosphonucleosides participates in regulation of intracellular nucleotide homeostasis. Binds to anionic phospholipids, predominantly to cardiolipin; the binding inhibits its phosphotransfer activity. Acts as a mitochondria-specific NDK; its association with cardiolipin-containing mitochondrial inner membrane is coupled to respiration suggesting that ADP locally regenerated in the mitochondrion innermembrane space by its activity is directly taken up via ANT ADP/ATP translocase into the matrix space to stimulate respiratory ATP regeneration. Proposed to increase GTP-loading on dynamin-related GTPase OPA1 in mitochondria. In vitro can induce liposome cross-linking suggesting that it can cross-link inner and outer membranes to form contact sites, and promotes intermembrane migration of anionic phosphoplipids. Promotes the redistribution of cardiolipin between the mitochondrial inner membrane and outer membrane which is implicated in pro-apoptotic signaling. The polypeptide is Nucleoside diphosphate kinase, mitochondrial (Nme4) (Mus musculus (Mouse)).